A 316-amino-acid polypeptide reads, in one-letter code: Transaldolase (316 aa).

Lys-132 functions as the Schiff-base intermediate with substrate in the catalytic mechanism.

Belongs to the transaldolase family. Type 1 subfamily. In terms of assembly, homodimer.

It localises to the cytoplasm. It catalyses the reaction D-sedoheptulose 7-phosphate + D-glyceraldehyde 3-phosphate = D-erythrose 4-phosphate + beta-D-fructose 6-phosphate. It participates in carbohydrate degradation; pentose phosphate pathway; D-glyceraldehyde 3-phosphate and beta-D-fructose 6-phosphate from D-ribose 5-phosphate and D-xylulose 5-phosphate (non-oxidative stage): step 2/3. In terms of biological role, transaldolase is important for the balance of metabolites in the pentose-phosphate pathway. In Vibrio cholerae serotype O1 (strain ATCC 39541 / Classical Ogawa 395 / O395), this protein is Transaldolase.